Consider the following 150-residue polypeptide: UPF0756 membrane protein ACICU_02320 (150 aa).

4 helical membrane-spanning segments follow: residues 1–21, 45–65, 83–103, and 115–135; these read MLAQ…CGLL, FFPY…TIGV, FISF…WLGG, and VVAG…GVPV.

Belongs to the UPF0756 family.

The protein resides in the cell membrane. This Acinetobacter baumannii (strain ACICU) protein is UPF0756 membrane protein ACICU_02320.